The chain runs to 39 residues: MTIDRIYPIFTVRWLAIHGLAVPTVFFLGSISAMQFIQR.

Residues Trp14–Ser30 form a helical membrane-spanning segment. His18 contributes to the heme binding site.

This sequence belongs to the PsbE/PsbF family. Heterodimer of an alpha subunit and a beta subunit. PSII is composed of 1 copy each of membrane proteins PsbA, PsbB, PsbC, PsbD, PsbE, PsbF, PsbH, PsbI, PsbJ, PsbK, PsbL, PsbM, PsbT, PsbX, PsbY, PsbZ, Psb30/Ycf12, at least 3 peripheral proteins of the oxygen-evolving complex and a large number of cofactors. It forms dimeric complexes. Requires heme b as cofactor.

It is found in the plastid. Its subcellular location is the chloroplast thylakoid membrane. Functionally, this b-type cytochrome is tightly associated with the reaction center of photosystem II (PSII). PSII is a light-driven water:plastoquinone oxidoreductase that uses light energy to abstract electrons from H(2)O, generating O(2) and a proton gradient subsequently used for ATP formation. It consists of a core antenna complex that captures photons, and an electron transfer chain that converts photonic excitation into a charge separation. This Ephedra sinica (Chinese ephedra) protein is Cytochrome b559 subunit beta.